The primary structure comprises 639 residues: tRNA uridine 5-carboxymethylaminomethyl modification enzyme MnmG (639 aa).

15–20 (GAGHAG) provides a ligand contact to FAD. 276–290 (GPRYCPSIEDKIVRF) contacts NAD(+).

The protein belongs to the MnmG family. Homodimer. Heterotetramer of two MnmE and two MnmG subunits. The cofactor is FAD.

It localises to the cytoplasm. Functionally, NAD-binding protein involved in the addition of a carboxymethylaminomethyl (cmnm) group at the wobble position (U34) of certain tRNAs, forming tRNA-cmnm(5)s(2)U34. The sequence is that of tRNA uridine 5-carboxymethylaminomethyl modification enzyme MnmG from Streptococcus gordonii (strain Challis / ATCC 35105 / BCRC 15272 / CH1 / DL1 / V288).